Here is a 452-residue protein sequence, read N- to C-terminus: UPF0210 protein Dred_1672 (452 aa).

This sequence belongs to the UPF0210 family. As to quaternary structure, homodimer.

This chain is UPF0210 protein Dred_1672, found in Desulforamulus reducens (strain ATCC BAA-1160 / DSM 100696 / MI-1) (Desulfotomaculum reducens).